We begin with the raw amino-acid sequence, 497 residues long: Cytochrome P450 76AD1 (497 aa).

A helical transmembrane segment spans residues 4–24 (ATLAMILAIWFISFHFIKLLF). Cys-439 lines the heme pocket.

Belongs to the cytochrome P450 family. Requires heme as cofactor.

The protein localises to the membrane. Its pathway is pigment biosynthesis; betalain biosynthesis. In terms of biological role, converts L-DOPA to cyclo-DOPA in the betalain pathway. Provides the cyclo-DOPA moiety of all red betacyanins. The protein is Cytochrome P450 76AD1 of Beta vulgaris (Sugar beet).